Reading from the N-terminus, the 203-residue chain is Glycerol-3-phosphate acyltransferase (203 aa).

The next 4 membrane-spanning stretches (helical) occupy residues 3–23 (LASA…AILV), 75–95 (LGLE…GHLF), 113–133 (VILG…LIVA), and 156–176 (LLTG…LIYW).

Belongs to the PlsY family. Probably interacts with PlsX.

The protein resides in the cell inner membrane. The catalysed reaction is an acyl phosphate + sn-glycerol 3-phosphate = a 1-acyl-sn-glycero-3-phosphate + phosphate. It participates in lipid metabolism; phospholipid metabolism. Its function is as follows. Catalyzes the transfer of an acyl group from acyl-phosphate (acyl-PO(4)) to glycerol-3-phosphate (G3P) to form lysophosphatidic acid (LPA). This enzyme utilizes acyl-phosphate as fatty acyl donor, but not acyl-CoA or acyl-ACP. This is Glycerol-3-phosphate acyltransferase from Thioalkalivibrio sulfidiphilus (strain HL-EbGR7).